Consider the following 461-residue polypeptide: Fumarate hydratase class II (461 aa).

Residues 98–100 (SGT), 129–132 (HPND), 139–141 (SSN), and Thr187 contribute to the substrate site. The active-site Proton donor/acceptor is His188. Ser318 is a catalytic residue. Residues Ser319 and 324-326 (KVN) contribute to the substrate site.

The protein belongs to the class-II fumarase/aspartase family. Fumarase subfamily. In terms of assembly, homotetramer.

It is found in the cytoplasm. It catalyses the reaction (S)-malate = fumarate + H2O. It participates in carbohydrate metabolism; tricarboxylic acid cycle; (S)-malate from fumarate: step 1/1. Involved in the TCA cycle. Catalyzes the stereospecific interconversion of fumarate to L-malate. The chain is Fumarate hydratase class II from Rickettsia prowazekii (strain Madrid E).